Here is a 314-residue protein sequence, read N- to C-terminus: MKQDLFILAGPTAVGKTDISIKLAQKLNGEIISADSMQIYKHMDIGSAKITEAEKEGIPHHLIDFVSPFDEFSVAEFKEKSKNAIKDIASRGKLPMIVGGTGFYIDSLIFNYDFANTYKDEEYREHLKNLASEHGKEYVHELLKDIDEVSYKKLYPNDLKRVIRALEVFKLTGKTISEFNKEQDIFDIPYNVYYFVLNMDRSKLYERINKRVDIMMEKGLIEEVKSLQNMGCTPDMQSMKGIGYKEILYYLDGKLSLDEAVELIKKGSRHYAKRQLTWFRKDNRVNWIDKDQYKDDTEVCNAIEEKFLNLKNNL.

10–17 contacts ATP; that stretch reads GPTAVGKT. 12-17 is a binding site for substrate; it reads TAVGKT. The tract at residues 35-38 is interaction with substrate tRNA; the sequence is DSMQ.

This sequence belongs to the IPP transferase family. As to quaternary structure, monomer. It depends on Mg(2+) as a cofactor.

The enzyme catalyses adenosine(37) in tRNA + dimethylallyl diphosphate = N(6)-dimethylallyladenosine(37) in tRNA + diphosphate. In terms of biological role, catalyzes the transfer of a dimethylallyl group onto the adenine at position 37 in tRNAs that read codons beginning with uridine, leading to the formation of N6-(dimethylallyl)adenosine (i(6)A). The protein is tRNA dimethylallyltransferase of Clostridium novyi (strain NT).